The chain runs to 425 residues: Glycosyl hydrolase family 109 protein 2 (425 aa).

Residues Asn29–Arg30, Glu51, Trp99–His102, Glu119–Val120, and Asn148 each bind NAD(+). Tyr177 is a binding site for substrate. NAD(+) is bound by residues Phe194–Trp198 and Tyr211. Residues Tyr211–His214 and Tyr293 contribute to the substrate site.

This sequence belongs to the Gfo/Idh/MocA family. Glycosyl hydrolase 109 subfamily. Requires NAD(+) as cofactor.

Glycosidase. In Bacteroides fragilis (strain YCH46), this protein is Glycosyl hydrolase family 109 protein 2.